A 225-amino-acid polypeptide reads, in one-letter code: Ribosomal RNA small subunit methyltransferase G (225 aa).

S-adenosyl-L-methionine is bound by residues G89, L94, 140–141 (IE), and R157.

It belongs to the methyltransferase superfamily. RNA methyltransferase RsmG family.

It localises to the cytoplasm. The catalysed reaction is guanosine(527) in 16S rRNA + S-adenosyl-L-methionine = N(7)-methylguanosine(527) in 16S rRNA + S-adenosyl-L-homocysteine. Specifically methylates the N7 position of guanine in position 527 of 16S rRNA. The sequence is that of Ribosomal RNA small subunit methyltransferase G from Psychrobacter sp. (strain PRwf-1).